Here is an 82-residue protein sequence, read N- to C-terminus: UPF0298 protein SMU_1670c (82 aa).

Belongs to the UPF0298 family.

The protein resides in the cytoplasm. The polypeptide is UPF0298 protein SMU_1670c (Streptococcus mutans serotype c (strain ATCC 700610 / UA159)).